Here is a 114-residue protein sequence, read N- to C-terminus: Large ribosomal subunit protein P2v (114 aa).

The interval 74–114 is disordered; it reads VASGGGGGAAPAAEPASVESKKKEEEKEESEDDGGMMSLFD. Residue serine 103 is modified to Phosphoserine.

Belongs to the eukaryotic ribosomal protein P1/P2 family. In terms of assembly, P1 and P2 exist as dimers at the large ribosomal subunit. In terms of processing, phosphorylated.

Plays an important role in the elongation step of protein synthesis. The chain is Large ribosomal subunit protein P2v (RPP2E) from Arabidopsis thaliana (Mouse-ear cress).